We begin with the raw amino-acid sequence, 239 residues long: Transmembrane ascorbate ferrireductase 1 (239 aa).

Over 1 to 7 (MAVRINA) the chain is Cytoplasmic. The helical transmembrane segment at 8–28 (MAVTFVAHALAVIAAIMVLVW) threads the bilayer. One can recognise a Cytochrome b561 domain in the interval 13–216 (VAHALAVIAA…FGAFVVLTAS (204 aa)). The Lumenal segment spans residues 29–45 (SISYRGGLAWEATNKNL). A helical membrane pass occupies residues 46 to 66 (IFNLHPVLMLIGFIILGGEAI). His50 contributes to the heme b binding site. Residues 67–81 (ISYKSLPLEKPVKKL) lie on the Cytoplasmic side of the membrane. Residues 82-102 (IHLILHAIALALGIFGICAAF) form a helical membrane-spanning segment. Residues His83 and His117 each contribute to the heme b site. Over 103 to 119 (KNHNESHIPNLYSLHSW) the chain is Lumenal. Residues 120-140 (IGIGVISLYGFQWVYSFIVFF) traverse the membrane as a helical segment. The Cytoplasmic portion of the chain corresponds to 141 to 155 (FPGGSTNLKSGLLPW). His156 provides a ligand contact to heme b. A helical membrane pass occupies residues 156–176 (HAMLGLFVYILAVGNAALGFL). The Lumenal portion of the chain corresponds to 177–193 (EKLTFLENGGLDKYGSE). The chain crosses the membrane as a helical span at residues 194–214 (AFLINFTAIITILFGAFVVLT). At 215-239 (ASAESPSPSPSVSNDDSVDFSYSAI) the chain is on the cytoplasmic side. The disordered stretch occupies residues 217 to 239 (AESPSPSPSVSNDDSVDFSYSAI). A compositionally biased stretch (low complexity) spans 224–239 (PSVSNDDSVDFSYSAI).

As to quaternary structure, homodimer. Heme b serves as cofactor. As to expression, expressed in roots, seedlings and leaves. Lower expression in flowers. Expressed in the L1 layer of the shoot apex, in the epidermis of leaf primordia and young leaves and in vascular bundles. In the differentiation zone of the root, detected in the pericycle and in the epidermis, but not in the cortex. Strongly expressed in the lateral part of the root cap and in the epidermis of the root tip, but not in the meristematic tissue. Not expressed in lateral roots. In mature embryos, expressed in the epidermis, cotyledon tips and root tips.

Its subcellular location is the vacuole membrane. It carries out the reaction Fe(3+)(out) + L-ascorbate(in) = monodehydro-L-ascorbate radical(in) + Fe(2+)(out) + H(+). Functionally, two-heme-containing cytochrome. Catalyzes ascorbate-dependent trans-membrane ferric-chelate reduction. Able to use dihydrolipoic acid (DHLA) as an alternative substrate to ascorbate. This chain is Transmembrane ascorbate ferrireductase 1 (CYB561A), found in Arabidopsis thaliana (Mouse-ear cress).